A 51-amino-acid polypeptide reads, in one-letter code: Lantibiotic lacticin-481 (51 aa).

Positions 1–24 (MKEQNSFNLLQEVTESELDLILGA) are excised as a propeptide. Positions 33–38 (TISHEC) form a cross-link, beta-methyllanthionine (Thr-Cys). 2 cross-links (lanthionine (Ser-Cys)) span residues 35–49 (SHEC…VFTC) and 42–50 (SWQFVFTCC). Thr-48 carries the (Z)-2,3-didehydrobutyrine modification.

The protein belongs to the type A lantibiotic family. In terms of assembly, monomer or homodimer. Maturation of lantibiotics involves the enzymatic conversion of Thr, and Ser into dehydrated AA and the formation of thioether bonds with cysteine. This is followed by membrane translocation and cleavage of the modified precursor. In terms of processing, it is established that the 2,3-didehydrobutyrine is the Z-isomer.

Its function is as follows. Lanthionine-containing peptide antibiotic (lantibiotic) active on Gram-positive bacteria. The bactericidal activity of lantibiotics is based on depolarization of energized bacterial cytoplasmic membranes, initiated by the formation of aqueous transmembrane pores. Lacticin 481 is a broad spectrum bacteriocin exhibiting activity against a wide range of lactic acid bacteria and C.tyrobutyricum. The protein is Lantibiotic lacticin-481 (lctA) of Lactococcus lactis subsp. lactis (Streptococcus lactis).